Consider the following 288-residue polypeptide: Bifunctional protein FolD (288 aa).

NADP(+) contacts are provided by residues 166–168 (GRS), serine 191, and isoleucine 232.

Belongs to the tetrahydrofolate dehydrogenase/cyclohydrolase family. As to quaternary structure, homodimer.

The enzyme catalyses (6R)-5,10-methylene-5,6,7,8-tetrahydrofolate + NADP(+) = (6R)-5,10-methenyltetrahydrofolate + NADPH. It catalyses the reaction (6R)-5,10-methenyltetrahydrofolate + H2O = (6R)-10-formyltetrahydrofolate + H(+). It participates in one-carbon metabolism; tetrahydrofolate interconversion. Its function is as follows. Catalyzes the oxidation of 5,10-methylenetetrahydrofolate to 5,10-methenyltetrahydrofolate and then the hydrolysis of 5,10-methenyltetrahydrofolate to 10-formyltetrahydrofolate. This is Bifunctional protein FolD from Rickettsia massiliae (strain Mtu5).